We begin with the raw amino-acid sequence, 78 residues long: Large ribosomal subunit protein uL29 (78 aa).

Belongs to the universal ribosomal protein uL29 family.

The polypeptide is Large ribosomal subunit protein uL29 (Rippkaea orientalis (strain PCC 8801 / RF-1) (Cyanothece sp. (strain PCC 8801))).